An 80-amino-acid chain; its full sequence is Defensin-like protein 46 (80 aa).

The first 27 residues, Met-1–Ala-27, serve as a signal peptide directing secretion. Intrachain disulfides connect Cys-40–Cys-78, Cys-44–Cys-65, Cys-50–Cys-76, and Cys-54–Cys-77.

The protein belongs to the DEFL family.

It is found in the secreted. The protein is Defensin-like protein 46 of Arabidopsis thaliana (Mouse-ear cress).